A 239-amino-acid polypeptide reads, in one-letter code: Non-structural protein V (239 aa).

2 disordered regions span residues 30 to 104 (PVET…ADEA) and 126 to 180 (NKSS…HRRE). The segment covering 65 to 74 (TPDRQDRSDK) has biased composition (basic and acidic residues). Polar residues-rich tracts occupy residues 89 to 98 (PATSTDQPPT) and 143 to 153 (ASSTSDSTAGE). Residues His177, Cys196, Cys200, Cys212, Cys214, Cys217, Cys221, and Cys224 each coordinate Zn(2+).

In terms of assembly, interacts with host STAT1. Interacts with host TXNL1. Interacts (via C-terminus) with host CacyBP; this interaction inhibits host cell apoptosis.

The protein resides in the host cytoplasm. Its subcellular location is the host nucleus. Functionally, protects the virus against cell antiviral state by blocking host interferon signaling. Mechanistically, targets host phosphorylated STAT1 (phospho-STAT1) for degradation, thereby inhibiting the interferon alpha signaling pathway. Plays a role in the inhibition of host apoptosis. Interacts with and down-regulates the expression of host TXNL1. In turn, inhibits TXNL1-induced apoptosis through the BCL2-BAX-caspase 3 pathway. Inhibits host apoptosis also by negatively regulating host CacyBP/SIP. Promotes viral replication by activating the extracellular signal-regulated kinase (ERK) pathway. The protein is Non-structural protein V (P/V) of Gallus gallus (Chicken).